The following is a 210-amino-acid chain: ATP-dependent Clp protease proteolytic subunit (210 aa).

Serine 106 serves as the catalytic Nucleophile. The active site involves histidine 131.

Belongs to the peptidase S14 family. In terms of assembly, fourteen ClpP subunits assemble into 2 heptameric rings which stack back to back to give a disk-like structure with a central cavity, resembling the structure of eukaryotic proteasomes.

The protein localises to the cytoplasm. The catalysed reaction is Hydrolysis of proteins to small peptides in the presence of ATP and magnesium. alpha-casein is the usual test substrate. In the absence of ATP, only oligopeptides shorter than five residues are hydrolyzed (such as succinyl-Leu-Tyr-|-NHMec, and Leu-Tyr-Leu-|-Tyr-Trp, in which cleavage of the -Tyr-|-Leu- and -Tyr-|-Trp bonds also occurs).. In terms of biological role, cleaves peptides in various proteins in a process that requires ATP hydrolysis. Has a chymotrypsin-like activity. Plays a major role in the degradation of misfolded proteins. The protein is ATP-dependent Clp protease proteolytic subunit of Bartonella henselae (strain ATCC 49882 / DSM 28221 / CCUG 30454 / Houston 1) (Rochalimaea henselae).